We begin with the raw amino-acid sequence, 116 residues long: Ribonuclease P protein component (116 aa).

The protein belongs to the RnpA family. As to quaternary structure, consists of a catalytic RNA component (M1 or rnpB) and a protein subunit.

The enzyme catalyses Endonucleolytic cleavage of RNA, removing 5'-extranucleotides from tRNA precursor.. Functionally, RNaseP catalyzes the removal of the 5'-leader sequence from pre-tRNA to produce the mature 5'-terminus. It can also cleave other RNA substrates such as 4.5S RNA. The protein component plays an auxiliary but essential role in vivo by binding to the 5'-leader sequence and broadening the substrate specificity of the ribozyme. The polypeptide is Ribonuclease P protein component (Pseudanabaena sp. (strain PCC 6903)).